Consider the following 1248-residue polypeptide: von Willebrand factor A domain-containing protein 5B2 (1248 aa).

The 138-residue stretch at 1–138 folds into the VIT domain; the sequence is MPGLYCPTSW…TMTVTLCSSR (138 aa). Residues 184–204 form a disordered region; sequence VGSPEEERPTWEQPTATPDVF. A VWFA domain is found at 354–527; it reads ELLFLLDGSG…KALEPALSDI (174 aa). 5 disordered regions span residues 590-650, 672-710, 751-789, 1008-1037, and 1126-1168; these read PEEV…SSDT, SASPEPGPGSTCSSESPGSQGPGSPSGSRPLDPPSQQGC, ALAGRSLSSPSGRANPVPGRARHPSLDAIPDGLGPEPGQ, SKSALGEPISPTGDHHGLPHQPPASSRLSL, and DSAT…SSDL. A compositionally biased stretch (polar residues) spans 595–619; sequence SATSPGTEPTHTTEPLGTGTVSAEL. 3 stretches are compositionally biased toward low complexity: residues 684–701, 751–764, and 780–789; these read SSESPGSQGPGSPSGSRP, ALAGRSLSSPSGRA, and PDGLGPEPGQ. Low complexity predominate over residues 1127–1145; the sequence is SATASCSQSPSSGSEGPGQ. Residues 1159-1168 show a composition bias toward basic and acidic residues; that stretch reads GMERQDSSDL.

This Mus musculus (Mouse) protein is von Willebrand factor A domain-containing protein 5B2 (Vwa5b2).